The following is a 204-amino-acid chain: Tumor protein D53 (204 aa).

The tract at residues 1–20 is disordered; that stretch reads MEAQAQGLLETEPLQGTDED. Positions 22 to 73 form a coiled coil; sequence VASADFSSMLSEEEKEELKAELVQLEDEITTLRQVLSAKERHLVEIKQKLGM. A phosphoserine mark is found at Ser29, Ser86, Ser122, and Ser131. Residue Arg133 is modified to Omega-N-methylarginine. Thr146 carries the post-translational modification Phosphothreonine. Residues Ser149 and Ser174 each carry the phosphoserine modification.

It belongs to the TPD52 family. As to quaternary structure, forms a homodimer or heterodimer with other members of the family.

This Homo sapiens (Human) protein is Tumor protein D53 (TPD52L1).